We begin with the raw amino-acid sequence, 310 residues long: Tagatose-6-phosphate kinase (310 aa).

Belongs to the carbohydrate kinase PfkB family. LacC subfamily.

It catalyses the reaction D-tagatofuranose 6-phosphate + ATP = D-tagatofuranose 1,6-bisphosphate + ADP + H(+). It functions in the pathway carbohydrate metabolism; D-tagatose 6-phosphate degradation; D-glyceraldehyde 3-phosphate and glycerone phosphate from D-tagatose 6-phosphate: step 1/2. The sequence is that of Tagatose-6-phosphate kinase from Staphylococcus aureus (strain USA300 / TCH1516).